The chain runs to 180 residues: Adenine phosphoribosyltransferase (180 aa).

Ser-2 carries the post-translational modification N-acetylserine. 2 positions are modified to phosphoserine: Ser-15 and Ser-30. Tyr-60 carries the phosphotyrosine modification. Ser-66 bears the Phosphoserine mark. Lys-114 carries the post-translational modification N6-acetyllysine. A Phosphothreonine modification is found at Thr-135.

Belongs to the purine/pyrimidine phosphoribosyltransferase family. In terms of assembly, homodimer.

The protein resides in the cytoplasm. It catalyses the reaction AMP + diphosphate = 5-phospho-alpha-D-ribose 1-diphosphate + adenine. Its pathway is purine metabolism; AMP biosynthesis via salvage pathway; AMP from adenine: step 1/1. In terms of biological role, catalyzes a salvage reaction resulting in the formation of AMP, that is energically less costly than de novo synthesis. This chain is Adenine phosphoribosyltransferase, found in Stochomys longicaudatus (Target rat).